Consider the following 278-residue polypeptide: Large ribosomal subunit protein uL2 (278 aa).

Positions 201–278 (HGNINDGKAG…IMRSRHQRKK (78 aa)) are disordered. Over residues 210-221 (GRSRWRGKRPHV) the composition is skewed to basic residues.

This sequence belongs to the universal ribosomal protein uL2 family. As to quaternary structure, part of the 50S ribosomal subunit. Forms a bridge to the 30S subunit in the 70S ribosome.

Its function is as follows. One of the primary rRNA binding proteins. Required for association of the 30S and 50S subunits to form the 70S ribosome, for tRNA binding and peptide bond formation. It has been suggested to have peptidyltransferase activity; this is somewhat controversial. Makes several contacts with the 16S rRNA in the 70S ribosome. The sequence is that of Large ribosomal subunit protein uL2 from Agrobacterium fabrum (strain C58 / ATCC 33970) (Agrobacterium tumefaciens (strain C58)).